Consider the following 265-residue polypeptide: Cytochrome c oxidase subunit 3 (265 aa).

The next 6 helical transmembrane spans lie at 16-36 (PWPI…VMYM), 41-61 (GGAT…FVWW), 84-104 (YGSI…FWAS), 162-182 (AVYA…FQGM), 200-220 (FFLA…FLIV), and 245-265 (WHFV…WGGI).

The protein belongs to the cytochrome c oxidase subunit 3 family. In terms of assembly, component of the cytochrome c oxidase (complex IV, CIV), a multisubunit enzyme composed of a catalytic core of 3 subunits and several supernumerary subunits. The complex exists as a monomer or a dimer and forms supercomplexes (SCs) in the inner mitochondrial membrane with ubiquinol-cytochrome c oxidoreductase (cytochrome b-c1 complex, complex III, CIII).

It is found in the mitochondrion inner membrane. It catalyses the reaction 4 Fe(II)-[cytochrome c] + O2 + 8 H(+)(in) = 4 Fe(III)-[cytochrome c] + 2 H2O + 4 H(+)(out). Component of the cytochrome c oxidase, the last enzyme in the mitochondrial electron transport chain which drives oxidative phosphorylation. The respiratory chain contains 3 multisubunit complexes succinate dehydrogenase (complex II, CII), ubiquinol-cytochrome c oxidoreductase (cytochrome b-c1 complex, complex III, CIII) and cytochrome c oxidase (complex IV, CIV), that cooperate to transfer electrons derived from NADH and succinate to molecular oxygen, creating an electrochemical gradient over the inner membrane that drives transmembrane transport and the ATP synthase. Cytochrome c oxidase is the component of the respiratory chain that catalyzes the reduction of oxygen to water. Electrons originating from reduced cytochrome c in the intermembrane space (IMS) are transferred via the dinuclear copper A center (CU(A)) of subunit 2 and heme A of subunit 1 to the active site in subunit 1, a binuclear center (BNC) formed by heme A3 and copper B (CU(B)). The BNC reduces molecular oxygen to 2 water molecules using 4 electrons from cytochrome c in the IMS and 4 protons from the mitochondrial matrix. The chain is Cytochrome c oxidase subunit 3 (COX3) from Aegilops columnaris (Goatgrass).